The primary structure comprises 94 residues: Cell division protein FtsB (94 aa).

Over Met1 to Thr3 the chain is Cytoplasmic. Residues Phe4–Phe21 form a helical membrane-spanning segment. The Periplasmic portion of the chain corresponds to Gly22–Gly94. Positions Ser33 to Ala71 form a coiled coil.

It belongs to the FtsB family. As to quaternary structure, part of a complex composed of FtsB, FtsL and FtsQ.

It is found in the cell inner membrane. Its function is as follows. Essential cell division protein. May link together the upstream cell division proteins, which are predominantly cytoplasmic, with the downstream cell division proteins, which are predominantly periplasmic. The protein is Cell division protein FtsB of Aliivibrio fischeri (strain ATCC 700601 / ES114) (Vibrio fischeri).